Here is a 342-residue protein sequence, read N- to C-terminus: Organic solute transporter alpha-like protein 2 (342 aa).

The Extracellular portion of the chain corresponds to 1–50; it reads MLEISPWETLVKLLTDSLLNCTGTHEDVPHAKTFLRSLTTTYIASLAVAT. Asparagine 20 carries N-linked (GlcNAc...) asparagine glycosylation. A helical membrane pass occupies residues 51–71; sequence AVTVGTVCLAVLHLIYIHFYI. Residues 72-79 lie on the Cytoplasmic side of the membrane; it reads THSSRRLH. A helical transmembrane segment spans residues 80-100; it reads IVLLACTAPLVSLLALVAMYM. The Extracellular portion of the chain corresponds to 101–109; it reads PRVWFLSHL. The helical transmembrane segment at 110-130 threads the bilayer; the sequence is LSFLYFSFALWVIICLLLHIF. Topologically, residues 131-176 are cytoplasmic; sequence DGHHALVTKMMQRLQYVEIATPPFCCLFPCLPKVRLEGKKIRWCEL. A helical transmembrane segment spans residues 177-197; that stretch reads MVMQAPIVRLFATLVSLVIYF. At 198–208 the chain is on the extracellular side; it reads EYQDQGLVPLK. A helical membrane pass occupies residues 209-229; that stretch reads VLDFITLPSLLAGIYGTHILV. Residues 230–243 lie on the Cytoplasmic side of the membrane; that stretch reads TTVSRMDELISYRY. Residues 244–264 form a helical membrane-spanning segment; the sequence is VVVFRLLDFFFMVFGLQQPVF. Residues 265 to 290 lie on the Extracellular side of the membrane; the sequence is DFLARYGAFGCGTVLPAIETSFYWKN. Residues 291–311 traverse the membrane as a helical segment; it reads FFTVIEAFCVTLISTVLLQPS. Over 312–342 the chain is Cytoplasmic; that stretch reads KSSFFDKHPSCRSMSSARSTITDVDTDESTT.

It belongs to the OST-alpha family.

It localises to the cell membrane. Probable transporter. The polypeptide is Organic solute transporter alpha-like protein 2 (osta-2) (Caenorhabditis elegans).